The sequence spans 115 residues: Kunitz-type trypsin inhibitor 1 (115 aa).

The protein belongs to the protease inhibitor I3 (leguminous Kunitz-type inhibitor) family.

Exhibits Kunitz trypsin protease inhibitor activity. In Selenicereus undatus (Pitahaya), this protein is Kunitz-type trypsin inhibitor 1.